A 175-amino-acid chain; its full sequence is Ribosome maturation factor RimM (175 aa).

The PRC barrel domain maps to 95 to 175 (SEDEFYWREL…RIEVDWDPGF (81 aa)).

Belongs to the RimM family. In terms of assembly, binds ribosomal protein uS19.

Its subcellular location is the cytoplasm. Its function is as follows. An accessory protein needed during the final step in the assembly of 30S ribosomal subunit, possibly for assembly of the head region. Essential for efficient processing of 16S rRNA. May be needed both before and after RbfA during the maturation of 16S rRNA. It has affinity for free ribosomal 30S subunits but not for 70S ribosomes. The sequence is that of Ribosome maturation factor RimM from Aliivibrio salmonicida (strain LFI1238) (Vibrio salmonicida (strain LFI1238)).